The chain runs to 318 residues: Protein FAM228A (318 aa).

Residues 259–297 are disordered; sequence SQESKRHEKKGLALGTGQHRPRSWAAGEGQQRRRSQPVD.

This sequence belongs to the FAM228 family.

The protein is Protein FAM228A (FAM228A) of Bos taurus (Bovine).